Here is a 675-residue protein sequence, read N- to C-terminus: Probable potassium transport system protein Kup (675 aa).

A run of 12 helical transmembrane segments spans residues 12–32 (LGML…PLYV), 55–75 (VSLI…LVAL), 98–118 (WLIF…TLTP), 143–163 (WLVP…QVLG), 170–190 (SFGP…LLNI), 216–236 (MGIF…ALYS), 249–269 (TWPF…AWML), 296–316 (IAMI…LITG), 345–365 (IYIG…VWLF), 374–394 (AYGL…SQWV), 401–421 (FWSL…LVAS), and 428–448 (GGYL…VWFF).

It belongs to the HAK/KUP transporter (TC 2.A.72) family.

The protein resides in the cell membrane. It carries out the reaction K(+)(in) + H(+)(in) = K(+)(out) + H(+)(out). Functionally, transport of potassium into the cell. Likely operates as a K(+):H(+) symporter. The chain is Probable potassium transport system protein Kup from Levilactobacillus brevis (strain ATCC 367 / BCRC 12310 / CIP 105137 / JCM 1170 / LMG 11437 / NCIMB 947 / NCTC 947) (Lactobacillus brevis).